Here is a 172-residue protein sequence, read N- to C-terminus: Large ribosomal subunit protein uL10 (172 aa).

This sequence belongs to the universal ribosomal protein uL10 family. In terms of assembly, part of the ribosomal stalk of the 50S ribosomal subunit. The N-terminus interacts with L11 and the large rRNA to form the base of the stalk. The C-terminus forms an elongated spine to which L12 dimers bind in a sequential fashion forming a multimeric L10(L12)X complex.

Functionally, forms part of the ribosomal stalk, playing a central role in the interaction of the ribosome with GTP-bound translation factors. The protein is Large ribosomal subunit protein uL10 of Caulobacter sp. (strain K31).